We begin with the raw amino-acid sequence, 314 residues long: tRNA dimethylallyltransferase (314 aa).

11–18 serves as a coordination point for ATP; it reads GPTAVGKT. 13 to 18 is a binding site for substrate; sequence TAVGKT. An interaction with substrate tRNA region spans residues 36–39; it reads DSMQ.

The protein belongs to the IPP transferase family. In terms of assembly, monomer. The cofactor is Mg(2+).

The enzyme catalyses adenosine(37) in tRNA + dimethylallyl diphosphate = N(6)-dimethylallyladenosine(37) in tRNA + diphosphate. Catalyzes the transfer of a dimethylallyl group onto the adenine at position 37 in tRNAs that read codons beginning with uridine, leading to the formation of N6-(dimethylallyl)adenosine (i(6)A). The polypeptide is tRNA dimethylallyltransferase (Bacillus anthracis).